A 509-amino-acid polypeptide reads, in one-letter code: Coiled-coil domain-containing protein 181 (509 aa).

Disordered stretches follow at residues 1–122 (MDED…EDEE) and 237–369 (FLPP…EKKK). 2 stretches are compositionally biased toward basic and acidic residues: residues 22–33 (DLEWLINDKEKS) and 41–56 (ACKKEDDLDQVLKENE). Polar residues predominate over residues 60–69 (ELGQQLSDPD). 2 stretches are compositionally biased toward basic and acidic residues: residues 70-82 (NSPKDEALPRRND) and 266-275 (IKKEESEAKG). Polar residues predominate over residues 319 to 333 (RIQSAGVSPVTSTYC). 2 coiled-coil regions span residues 335–377 (SPRQ…VFKA) and 418–488 (LKKK…RSKQ). A compositionally biased stretch (basic and acidic residues) spans 337–369 (RQKELQKQLERKREKLKREEEQRKLEEENEKKK).

It belongs to the CCDC181 family. As to quaternary structure, homodimer. Interacts with HOOK1. Interacts with HOOK2. Interacts with HOOK3. In terms of tissue distribution, predominantly expressed in testis. Expressed at lower level in brain, eye, trachea and lung. Barely expressed in tongue, heart, liver, kidney, spleen and muscle. Present at high level in elongating spermatids, whereas lower levels are observed in round spermatids (at protein level).

It is found in the cytoplasm. Its subcellular location is the cytoskeleton. The protein localises to the cell projection. It localises to the cilium. The protein resides in the flagellum. Functionally, microtubule-binding protein that localizes to the microtubular manchette of elongating spermatids. The protein is Coiled-coil domain-containing protein 181 of Mus musculus (Mouse).